We begin with the raw amino-acid sequence, 257 residues long: Protein KlaA (257 aa).

Its function is as follows. Belongs to the kla operon, which is associated with cryptic tellurite resistance, and IncW plasmid fertility inhibition. The sequence is that of Protein KlaA (klaA) from Escherichia coli.